The sequence spans 141 residues: Galactose-6-phosphate isomerase subunit LacA (141 aa).

This sequence belongs to the LacAB/RpiB family. As to quaternary structure, heteromultimeric protein consisting of LacA and LacB.

The catalysed reaction is aldehydo-D-galactose 6-phosphate = keto-D-tagatose 6-phosphate. Its pathway is carbohydrate metabolism; D-galactose 6-phosphate degradation; D-tagatose 6-phosphate from D-galactose 6-phosphate: step 1/1. This Streptococcus equi subsp. zooepidemicus (strain MGCS10565) protein is Galactose-6-phosphate isomerase subunit LacA.